A 576-amino-acid polypeptide reads, in one-letter code: Formate--tetrahydrofolate ligase 2 (576 aa).

69 to 76 contacts ATP; sequence TPLGEGKT.

This sequence belongs to the formate--tetrahydrofolate ligase family.

It catalyses the reaction (6S)-5,6,7,8-tetrahydrofolate + formate + ATP = (6R)-10-formyltetrahydrofolate + ADP + phosphate. Its pathway is one-carbon metabolism; tetrahydrofolate interconversion. The sequence is that of Formate--tetrahydrofolate ligase 2 from Rubrobacter xylanophilus (strain DSM 9941 / JCM 11954 / NBRC 16129 / PRD-1).